Consider the following 276-residue polypeptide: Large ribosomal subunit protein uL2 (276 aa).

Residues 212–276 (NRHRGIRPQT…KLIISRKKHK (65 aa)) are disordered. Residues 257–276 (YKTRKKKASDKLIISRKKHK) are compositionally biased toward basic residues.

Belongs to the universal ribosomal protein uL2 family. In terms of assembly, part of the 50S ribosomal subunit. Forms a bridge to the 30S subunit in the 70S ribosome.

In terms of biological role, one of the primary rRNA binding proteins. Required for association of the 30S and 50S subunits to form the 70S ribosome, for tRNA binding and peptide bond formation. It has been suggested to have peptidyltransferase activity; this is somewhat controversial. Makes several contacts with the 16S rRNA in the 70S ribosome. The polypeptide is Large ribosomal subunit protein uL2 (Helicobacter pylori (strain P12)).